A 189-amino-acid chain; its full sequence is Adenylate kinase (189 aa).

12-17 serves as a coordination point for ATP; it reads GSGKTT. The interval 33–62 is NMP; it reads STGDLLRAEVASGSELGKLIDGFISKGNLV. AMP is bound by residues threonine 34, arginine 39, 60-62, 87-90, and glutamine 94; these read NLV and GYPR. The LID stretch occupies residues 129–135; the sequence is GRARGAD. Arginine 130 provides a ligand contact to ATP. AMP is bound by residues arginine 132 and arginine 144. Arginine 172 contributes to the ATP binding site.

This sequence belongs to the adenylate kinase family. Monomer.

It is found in the cytoplasm. It catalyses the reaction AMP + ATP = 2 ADP. It participates in purine metabolism; AMP biosynthesis via salvage pathway; AMP from ADP: step 1/1. Catalyzes the reversible transfer of the terminal phosphate group between ATP and AMP. Plays an important role in cellular energy homeostasis and in adenine nucleotide metabolism. The protein is Adenylate kinase of Campylobacter concisus (strain 13826).